A 78-amino-acid polypeptide reads, in one-letter code: UPF0335 protein RP113 (78 aa).

The protein belongs to the UPF0335 family.

This chain is UPF0335 protein RP113, found in Rickettsia prowazekii (strain Madrid E).